The primary structure comprises 359 residues: Heat-inducible transcription repressor HrcA (359 aa).

Belongs to the HrcA family.

Its function is as follows. Negative regulator of class I heat shock genes (grpE-dnaK-dnaJ and groELS operons). Prevents heat-shock induction of these operons. The sequence is that of Heat-inducible transcription repressor HrcA from Sinorhizobium fredii (strain NBRC 101917 / NGR234).